The primary structure comprises 159 residues: Peptide methionine sulfoxide reductase MsrB (159 aa).

The 124-residue stretch at 14–137 (TEKLKENLTE…NSASLKFIAK (124 aa)) folds into the MsrB domain. Cys-126 acts as the Nucleophile in catalysis.

This sequence belongs to the MsrB Met sulfoxide reductase family.

It carries out the reaction L-methionyl-[protein] + [thioredoxin]-disulfide + H2O = L-methionyl-(R)-S-oxide-[protein] + [thioredoxin]-dithiol. The polypeptide is Peptide methionine sulfoxide reductase MsrB (Hathewaya histolytica (Clostridium histolyticum)).